Here is a 658-residue protein sequence, read N- to C-terminus: Aminopeptidase P1 (658 aa).

The a peptide site is built by R69 and H436. Mn(2+) contacts are provided by D456, D467, and H530. A peptide is bound by residues H530, H539, and E563. Mn(2+)-binding residues include E563 and E577.

The protein belongs to the peptidase M24B family. As to quaternary structure, homodimer. Interacts with N-1-naphthylphthalamic acid (NPA). Interacts with NBCL/BOP2/COCH around the plasma membrane and in the nucleus; this interaction disturbs its regulation of the nuclear transcription factor Y subunit (NF-YA1). Mn(2+) is required as a cofactor. Requires Zn(2+) as cofactor. In terms of tissue distribution, expressed at similar levels in shoot apical meristems (SAM), root meristems (RM), root apical meristems (RAM), roots and leaves and, to a slightly lesser degree, in root nodules.

Its subcellular location is the nucleus. It is found in the cytoplasm. It localises to the cell membrane. The protein localises to the microsome membrane. It carries out the reaction Release of any N-terminal amino acid, including proline, that is linked to proline, even from a dipeptide or tripeptide.. Functionally, catalyzes the removal of a penultimate prolyl residue from the N-termini of peptides, such as Arg-Pro-Pro. Aminopeptidase that binds to the auxin transport inhibitor N-1-naphthylphthalamic acid (NPA). May play a negative role in the regulation of PIN auxin transport proteins. Involved in the coordination of the symbiotic nodule developmental program; prevents the formation of root nodules by regulating the expression of the nuclear transcription factor Y subunit (NF-YA1), a key nodulin. This Lotus japonicus (Lotus corniculatus var. japonicus) protein is Aminopeptidase P1.